The primary structure comprises 148 residues: Large ribosomal subunit protein uL15 (148 aa).

Residues 1–47 are disordered; that stretch reads MTKLEDLRPTPGSVKPRKRVGRGIGSGHGKTSGRGHKGQKSRGSGKV. The segment covering 31 to 45 has biased composition (basic residues); that stretch reads TSGRGHKGQKSRGSG.

This sequence belongs to the universal ribosomal protein uL15 family. Part of the 50S ribosomal subunit.

In terms of biological role, binds to the 23S rRNA. In Pseudothermotoga lettingae (strain ATCC BAA-301 / DSM 14385 / NBRC 107922 / TMO) (Thermotoga lettingae), this protein is Large ribosomal subunit protein uL15.